Reading from the N-terminus, the 240-residue chain is Probable transcriptional regulatory protein HPP12_0160 (240 aa).

The protein belongs to the TACO1 family.

Its subcellular location is the cytoplasm. The protein is Probable transcriptional regulatory protein HPP12_0160 of Helicobacter pylori (strain P12).